Reading from the N-terminus, the 178-residue chain is Photosystem I assembly protein Ycf4 (178 aa).

2 helical membrane passes run 19 to 39 (ILVA…SLSS) and 61 to 81 (LVMG…WAVI).

It belongs to the Ycf4 family.

It is found in the cellular thylakoid membrane. In terms of biological role, seems to be required for the assembly of the photosystem I complex. The chain is Photosystem I assembly protein Ycf4 from Synechococcus sp. (strain WH7803).